The chain runs to 495 residues: Probable cytosol aminopeptidase (495 aa).

Positions 267 and 272 each coordinate Mn(2+). Lys279 is a catalytic residue. Mn(2+) contacts are provided by Asp290, Asp349, and Glu351. Arg353 is an active-site residue.

It belongs to the peptidase M17 family. Mn(2+) serves as cofactor.

Its subcellular location is the cytoplasm. The enzyme catalyses Release of an N-terminal amino acid, Xaa-|-Yaa-, in which Xaa is preferably Leu, but may be other amino acids including Pro although not Arg or Lys, and Yaa may be Pro. Amino acid amides and methyl esters are also readily hydrolyzed, but rates on arylamides are exceedingly low.. The catalysed reaction is Release of an N-terminal amino acid, preferentially leucine, but not glutamic or aspartic acids.. In terms of biological role, presumably involved in the processing and regular turnover of intracellular proteins. Catalyzes the removal of unsubstituted N-terminal amino acids from various peptides. The chain is Probable cytosol aminopeptidase from Histophilus somni (strain 129Pt) (Haemophilus somnus).